The chain runs to 302 residues: Glycine--tRNA ligase alpha subunit (302 aa).

It belongs to the class-II aminoacyl-tRNA synthetase family. In terms of assembly, tetramer of two alpha and two beta subunits.

It is found in the cytoplasm. The catalysed reaction is tRNA(Gly) + glycine + ATP = glycyl-tRNA(Gly) + AMP + diphosphate. In Enterococcus faecalis (strain ATCC 700802 / V583), this protein is Glycine--tRNA ligase alpha subunit.